The following is a 920-amino-acid chain: Protein translocase subunit SecA (920 aa).

Residues Q85, 103–107 (GEGKT), and D514 contribute to the ATP site. Positions 904, 906, 915, and 916 each coordinate Zn(2+).

This sequence belongs to the SecA family. As to quaternary structure, monomer and homodimer. Part of the essential Sec protein translocation apparatus which comprises SecA, SecYEG and auxiliary proteins SecDF-YajC and YidC. Zn(2+) serves as cofactor.

The protein resides in the cell inner membrane. Its subcellular location is the cytoplasm. It catalyses the reaction ATP + H2O + cellular proteinSide 1 = ADP + phosphate + cellular proteinSide 2.. In terms of biological role, part of the Sec protein translocase complex. Interacts with the SecYEG preprotein conducting channel. Has a central role in coupling the hydrolysis of ATP to the transfer of proteins into and across the cell membrane, serving both as a receptor for the preprotein-SecB complex and as an ATP-driven molecular motor driving the stepwise translocation of polypeptide chains across the membrane. The chain is Protein translocase subunit SecA from Janthinobacterium sp. (strain Marseille) (Minibacterium massiliensis).